Consider the following 347-residue polypeptide: Haptoglobin (347 aa).

The signal sequence occupies residues 1–18 (MRALGAVITLLLWGQLFA). The region spanning 31–88 (DSCPKPPEIANGYVEHLVRYQCKNYYRLRTEGDGVYALNSEKQWVNKAVGEQLPECEA) is the Sushi domain. Cystine bridges form between cysteine 52–cysteine 86 and cysteine 90–cysteine 207. One can recognise a Peptidase S1 domain in the interval 103-345 (IIGGSLDAKG…ILDWIQKTIA (243 aa)). Asparagine 148, asparagine 152, asparagine 182, asparagine 230, and asparagine 256 each carry an N-linked (GlcNAc...) asparagine glycan. 2 disulfide bridges follow: cysteine 250–cysteine 281 and cysteine 292–cysteine 322. Positions 259–264 (VPENKI) are interaction with CD163.

The protein belongs to the peptidase S1 family. As to quaternary structure, tetramer of two alpha and two beta chains; disulfide-linked. The hemoglobin/haptoglobin complex is composed of a haptoglobin dimer bound to two hemoglobin alpha-beta dimers. Interacts with CD163. Interacts with ERGIC3. Expressed by the liver and secreted in plasma.

It localises to the secreted. Its function is as follows. As a result of hemolysis, hemoglobin is found to accumulate in the kidney and is secreted in the urine. Haptoglobin captures, and combines with free plasma hemoglobin to allow hepatic recycling of heme iron and to prevent kidney damage. Haptoglobin also acts as an antioxidant, has antibacterial activity and plays a role in modulating many aspects of the acute phase response. Hemoglobin/haptoglobin complexes are rapidly cleared by the macrophage CD163 scavenger receptor expressed on the surface of liver Kupfer cells through an endocytic lysosomal degradation pathway. The sequence is that of Haptoglobin (HP) from Oryctolagus cuniculus (Rabbit).